The primary structure comprises 1488 residues: Eukaryotic translation initiation factor 4G (1488 aa).

3 disordered regions span residues 196–320 (VQHR…GQTS), 337–367 (DSEK…GKSE), and 415–707 (THQI…MTEA). Basic and acidic residues-rich tracts occupy residues 216–244 (VSEK…EKHP) and 274–299 (ADEK…RNDT). Polar residues-rich tracts occupy residues 300–310 (KNLPQQPQSAS), 345–360 (SKVS…SSIS), 448–464 (SLAT…SFVT), and 473–495 (CTTS…TQTL). Residues 496 to 520 (SASVDASDVSEVNSGTSSESTSQST) show a composition bias toward low complexity. A compositionally biased stretch (basic and acidic residues) spans 555–566 (QVKHADGAKDES). Residues 627–646 (QEQSESVATSDGADSSSTVD) show a composition bias toward polar residues. Residues 651 to 671 (LPEESEREVMCEDDGKKKVEP) are compositionally biased toward basic and acidic residues. Residues 683 to 696 (PKLQSSDSGNQASA) are compositionally biased toward polar residues. Residues 709–721 (GRKKYSRDFLLTF) are EIF4E-binding. The segment covering 753 to 784 (DREPHPSSARGSDRPTSRGDRRGPAMDDDKWL) has biased composition (basic and acidic residues). Disordered regions lie at residues 753 to 795 (DREP…PNRD), 974 to 1000 (RGER…EREE), and 1107 to 1299 (WQQR…SEEE). The MIF4G domain occupies 883–1106 (QRQLKAILNK…RDSIDLRKNK (224 aa)). Acidic residues predominate over residues 978–989 (EEAEADKTEEEG). 4 stretches are compositionally biased toward basic and acidic residues: residues 990–1000 (EIKQTKEEREE), 1111–1132 (RKVD…ERHA), 1181–1191 (IRYEQERHQFD), and 1254–1267 (TRED…DRFS). A compositionally biased stretch (polar residues) spans 1273 to 1294 (AAQSASSSHRPASQEGRSGNKS). Residues 1299–1423 (ELREKSIATI…VLQDVGKLIE (125 aa)) enclose the MI domain.

This sequence belongs to the eukaryotic initiation factor 4G family. EIF4F is a multi-subunit complex, the composition of which varies with external and internal environmental conditions. It is composed of at least EIF4A, EIF4E and EIF4G. In higher plants two isoforms of EIF4F have been identified, named isoform EIF4F and isoform EIF(iso)4F. Isoform EIF4F has subunits p220 and p26, whereas isoform EIF(iso)4F has subunits p82 and p28.

In terms of biological role, component of the protein complex eIF4F, which is involved in the recognition of the mRNA cap, ATP-dependent unwinding of 5'-terminal secondary structure and recruitment of mRNA to the ribosome. This is Eukaryotic translation initiation factor 4G from Triticum aestivum (Wheat).